We begin with the raw amino-acid sequence, 238 residues long: Probable transcriptional regulatory protein SMU_1789c (238 aa).

This sequence belongs to the TACO1 family. YeeN subfamily.

It is found in the cytoplasm. This Streptococcus mutans serotype c (strain ATCC 700610 / UA159) protein is Probable transcriptional regulatory protein SMU_1789c.